The primary structure comprises 83 residues: Disintegrin bitistatin (83 aa).

Residues 2–83 (PPVCGNKILE…GKSSDCPWNH (82 aa)) enclose the Disintegrin domain. 10 disulfide bridges follow: Cys5–Cys24, Cys5–Cys34, Cys16–Cys29, Cys16–Cys34, Cys18–Cys24, Cys18–Cys29, Cys28–Cys51, Cys42–Cys48, Cys47–Cys72, and Cys60–Cys79. Positions 64–66 (RGD) match the Cell attachment site motif.

This sequence belongs to the venom metalloproteinase (M12B) family. P-II subfamily. P-IIa sub-subfamily. In terms of assembly, monomer. Exists in 3 forms in the venom. The forms A, B, and C are present at 53%, 32% and 15%. The forms A and B differ by their disulfide bond pattern in the N-terminal part. No information is known about form C. In terms of tissue distribution, expressed by the venom gland.

The protein resides in the secreted. Its function is as follows. Inhibits fibrinogen interaction with platelets. Acts by binding to alpha-IIb/beta-3 (ITGA2B/ITGB3) on the platelet surface and inhibits aggregation induced by ADP, thrombin, platelet-activating factor and collagen. In Bitis arietans (African puff adder), this protein is Disintegrin bitistatin.